Consider the following 94-residue polypeptide: Co-chaperonin GroES (94 aa).

Belongs to the GroES chaperonin family. Heptamer of 7 subunits arranged in a ring. Interacts with the chaperonin GroEL.

It is found in the cytoplasm. Functionally, together with the chaperonin GroEL, plays an essential role in assisting protein folding. The GroEL-GroES system forms a nano-cage that allows encapsulation of the non-native substrate proteins and provides a physical environment optimized to promote and accelerate protein folding. GroES binds to the apical surface of the GroEL ring, thereby capping the opening of the GroEL channel. The polypeptide is Co-chaperonin GroES (Streptococcus agalactiae).